The chain runs to 7260 residues: Nonribosomal peptide synthetase ecdA (7260 aa).

The region spanning 4–80 is the Carrier 1 domain; it reads TNEMERKRVF…ELFETIQYLQ (77 aa). S41 carries the post-translational modification O-(pantetheine 4'-phosphoryl)serine. The interval 134–549 is condensation 1; the sequence is EDVYPSTPLQ…SINEILTLPA (416 aa). Positions 575–965 are adenylation 1; that stretch reads QDQVRSQPAA…DGSLLYVGRC (391 aa). One can recognise a Carrier 2 domain in the interval 1090 to 1166; it reads APSTAIEHKL…DLARELEGRN (77 aa). Residue S1127 is modified to O-(pantetheine 4'-phosphoryl)serine. The condensation 2 stretch occupies residues 1208 to 1628; that stretch reads EDIIPCTAMQ…LGDLSLLSAD (421 aa). The adenylation 2 stretch occupies residues 1653–2054; the sequence is EEQITARPDS…GRRDTQIKIR (402 aa). A Carrier 3 domain is found at 2188 to 2264; that stretch reads TPSTPTESQL…DLANLLSSRF (77 aa). S2225 bears the O-(pantetheine 4'-phosphoryl)serine mark. The condensation 3 stretch occupies residues 2314–2719; sequence QDVYPCTPLQ…THVVQQLCDP (406 aa). Positions 2763 to 3156 are adenylation 3; that stretch reads KQALAQPNAP…GRRDTQVKIR (394 aa). Residues 3287-3365 form the Carrier 4 domain; that stretch reads QPATEMEKML…ELAQVLEERV (79 aa). The residue at position 3324 (S3324) is an O-(pantetheine 4'-phosphoryl)serine. Positions 3417-3831 are condensation 4; sequence VQDVYPCTPL…LLSPNDQQQI (415 aa). The adenylation 4 stretch occupies residues 3851 to 4248; the sequence is EEQAMAHPTK…SFVYVARRNT (398 aa). The Carrier 5 domain occupies 4394-4471; it reads APATAMERTL…DLANLLADGA (78 aa). S4431 bears the O-(pantetheine 4'-phosphoryl)serine mark. Positions 4510 to 4910 are condensation 5; it reads EDIYPATPLQ…HFVHVAEQLF (401 aa). The tract at residues 4955–5357 is adenylation 5; the sequence is ERAALQPNAP…GRRDLQVKIR (403 aa). In terms of domain architecture, Carrier 6 spans 5496-5573; the sequence is APRTVMEQQV…DLALVLSERG (78 aa). O-(pantetheine 4'-phosphoryl)serine is present on S5533. The tract at residues 5622–6043 is condensation 6; sequence EDVYPCTPLQ…AVSEKDERQI (422 aa). The tract at residues 6063–6460 is adenylation 6; that stretch reads QEQVARTPGE…GRHDSQVKIR (398 aa). The region spanning 6592–6668 is the Carrier 7 domain; the sequence is APSTAMERQL…EVAQVVEDRV (77 aa). S6629 is modified (O-(pantetheine 4'-phosphoryl)serine). The segment at 6718–7133 is condensation 7; it reads LPTTDFQALT…ILDSPGLLVS (416 aa). The disordered stretch occupies residues 7241-7260; the sequence is CEEAEKSASVTSSERRLATI.

Belongs to the NRP synthetase family.

Its pathway is antifungal biosynthesis. Its function is as follows. Nonribosomal peptide synthetase; part of the gene cluster that mediates the biosynthesis of echinocandin B, a fungal lipidated cyclic hexapeptide that acts as an antifungal agent. Linoleoyl-AMP, produced by the fatty-acyl-AMP ligase ecdI, is transferred to the initiation carrier domain (T0) of ecdA. The linoleoyl-S-phosphopantetheinyl-T0 is sequentially extended with L-ornithine, L-threonine, L-proline, L-homotyrosine, L-threonine, and 4R-methyl-L-proline to form the linear hexapeptide. Thereafter, the terminal condensation (C7) performs macrocyclization of the NRPS product and the cyclic scaffold is released from ecdA. All six of the amino acid residues are hydroxylated, including 4R,5R-dihydroxy-L-ornithine, 4R-hydroxyl-L-proline, 3S,4S-dihydroxy-L-homotyrosine, and 3S-hydroxyl-4S-methyl-L-prolin. In the pathway, all the hydroxylation reactions are proposed to occur following completion of the cyclic peptide, so the unhydroxylated precursor produced by ecdA will undergo six rounds of hydroxylation. Five hydroxylase genes (ecdG, ecdH, ecdK, htyE and htyF) are embedded within the echinocandin B (ecd) and L-homotyrosine (hty) clusters. The protein is Nonribosomal peptide synthetase ecdA of Aspergillus rugulosus (Emericella rugulosa).